A 319-amino-acid polypeptide reads, in one-letter code: Small ribosomal subunit protein mS35 (319 aa).

A mitochondrion-targeting transit peptide spans methionine 1–asparagine 30.

It belongs to the mitochondrion-specific ribosomal protein mS35 family. As to quaternary structure, component of the mitochondrial small ribosomal subunit (mt-SSU). Mature yeast 74S mitochondrial ribosomes consist of a small (37S) and a large (54S) subunit. The 37S small subunit contains a 15S ribosomal RNA (15S mt-rRNA) and 34 different proteins. The 54S large subunit contains a 21S rRNA (21S mt-rRNA) and 46 different proteins.

It localises to the mitochondrion. In terms of biological role, component of the mitochondrial ribosome (mitoribosome), a dedicated translation machinery responsible for the synthesis of mitochondrial genome-encoded proteins, including at least some of the essential transmembrane subunits of the mitochondrial respiratory chain. The mitoribosomes are attached to the mitochondrial inner membrane and translation products are cotranslationally integrated into the membrane. The chain is Small ribosomal subunit protein mS35 (RSM24) from Saccharomyces cerevisiae (strain ATCC 204508 / S288c) (Baker's yeast).